The chain runs to 154 residues: Myoglobin (154 aa).

One can recognise a Globin domain in the interval 2-148 (GLSDGEWELV…FRNDIAAKYK (147 aa)). Serine 4 is modified (phosphoserine). Position 68 is a phosphothreonine (threonine 68). Residue histidine 94 coordinates heme b.

The protein belongs to the globin family. In terms of assembly, monomeric.

The protein resides in the cytoplasm. Its subcellular location is the sarcoplasm. The enzyme catalyses Fe(III)-heme b-[protein] + nitric oxide + H2O = Fe(II)-heme b-[protein] + nitrite + 2 H(+). It catalyses the reaction H2O2 + AH2 = A + 2 H2O. Its function is as follows. Monomeric heme protein which primary function is to store oxygen and facilitate its diffusion within muscle tissues. Reversibly binds oxygen through a pentacoordinated heme iron and enables its timely and efficient release as needed during periods of heightened demand. Depending on the oxidative conditions of tissues and cells, and in addition to its ability to bind oxygen, it also has a nitrite reductase activity whereby it regulates the production of bioactive nitric oxide. Under stress conditions, like hypoxia and anoxia, it also protects cells against reactive oxygen species thanks to its pseudoperoxidase activity. In Loxodonta africana (African elephant), this protein is Myoglobin (MB).